The chain runs to 124 residues: MARLVGVDLPRDKRMEVALTYIFGIGRTRSNEILAATGIDRDLRTRDLTEEQLIHLRDYIEANLKVEGDLRREVQADIRRKIEIGCYQGLRHRRGMPVRGQRTKTNARTRKGPKRTIAGKKKAR.

Residues 94-124 (RGMPVRGQRTKTNARTRKGPKRTIAGKKKAR) form a disordered region.

The protein belongs to the universal ribosomal protein uS13 family. Part of the 30S ribosomal subunit. Forms a loose heterodimer with protein S19. Forms two bridges to the 50S subunit in the 70S ribosome.

In terms of biological role, located at the top of the head of the 30S subunit, it contacts several helices of the 16S rRNA. In the 70S ribosome it contacts the 23S rRNA (bridge B1a) and protein L5 of the 50S subunit (bridge B1b), connecting the 2 subunits; these bridges are implicated in subunit movement. Contacts the tRNAs in the A and P-sites. The chain is Small ribosomal subunit protein uS13 from Mycobacterium tuberculosis (strain ATCC 25177 / H37Ra).